The sequence spans 1510 residues: Cysteine-tryptophan domain-containing zinc finger protein 5 (1510 aa).

The segment covering 174-196 (YCQRTSSENDSNHSQQLLNSGPE) has biased composition (polar residues). Disordered stretches follow at residues 174–198 (YCQR…PEQK), 449–497 (SSLD…CAKD), 555–574 (KPNY…YVLD), and 582–616 (LHTE…DHKI). Over residues 454-465 (GFSHKTKSDKCN) the composition is skewed to basic and acidic residues. Positions 467–476 (QPVTTSSQLQ) are enriched in polar residues. Basic and acidic residues-rich tracts occupy residues 479–497 (PAKK…CAKD) and 556–574 (PNYD…YVLD). The segment at 645-698 (SEPVDQWVCCDKCETWRLLPYGMNSDTLPKKWRCSMQSWLPGMNNCKLSEGETT) adopts a CW-type zinc-finger fold. The Zn(2+) site is built by cysteine 654, cysteine 657, cysteine 678, and cysteine 690. A compositionally biased stretch (basic and acidic residues) spans 768–780 (KQKRIESSDKGEK). 3 disordered regions span residues 768 to 893 (KQKR…RDLF), 1003 to 1050 (STAA…LDRH), and 1149 to 1194 (LPIH…VRPD). Polar residues predominate over residues 781–790 (STVTISSGQT). Basic and acidic residues predominate over residues 874–893 (NSDRGARASDAGKSDPRDLF). The segment covering 1003–1016 (STAATSSSSKVSSS) has biased composition (low complexity). Polar residues-rich tracts occupy residues 1026-1040 (TRTS…SPLR) and 1162-1182 (PDQN…QAKL).

As to expression, highly expressed in young panicles. Expressed at low levels in leaf sheaths, nodes, internodes and axillary buds.

It localises to the nucleus. Functionally, binds to histones H3K4me1, H3K4me2 and H3K4me3 in GST pull-down assay. May facilitate the recruitment of effectors to mediate gene expression. This Oryza sativa subsp. japonica (Rice) protein is Cysteine-tryptophan domain-containing zinc finger protein 5.